Here is a 345-residue protein sequence, read N- to C-terminus: Probable translocation protein y4yO (345 aa).

Basic and acidic residues predominate over residues 1-22; the sequence is MSDTSEEKSHGATPKKLSDARK. The tract at residues 1-25 is disordered; that stretch reads MSDTSEEKSHGATPKKLSDARKRGQ. 3 helical membrane passes run 87–107, 151–171, and 189–209; these read LATV…AALL, VLVL…TMVY, and QLIG…LLLQ.

This sequence belongs to the type III secretion exporter family.

Its subcellular location is the cell membrane. In terms of biological role, could be involved in the secretion of an unknown factor. The protein is Probable translocation protein y4yO of Sinorhizobium fredii (strain NBRC 101917 / NGR234).